The primary structure comprises 117 residues: Histone H1-like protein HC1 (117 aa).

Residues 57-117 (EKSGLMTRKP…KSSKSRYLRK (61 aa)) form a disordered region. The segment covering 66–81 (PATKAKKAAATKKAAP) has biased composition (basic residues). The span at 82-94 (KPKIQAKAAPKAK) shows a compositional bias: low complexity. Over residues 95 to 117 (ATTKKTPAKAKAKKSSKSRYLRK) the composition is skewed to basic residues.

It belongs to the histone H1/H5 family. HCT subfamily.

Functionally, might have a role analogous to that of eukaryotic histone proteins. This chain is Histone H1-like protein HC1 (hctA), found in Chlamydia psittaci (Chlamydophila psittaci).